Here is a 321-residue protein sequence, read N- to C-terminus: Lipoyl synthase (321 aa).

7 residues coordinate [4Fe-4S] cluster: Cys68, Cys73, Cys79, Cys94, Cys98, Cys101, and Ser308. The region spanning 80–297 is the Radical SAM core domain; sequence FNHGTATFMI…KEEAMAMGFT (218 aa).

The protein belongs to the radical SAM superfamily. Lipoyl synthase family. [4Fe-4S] cluster is required as a cofactor.

It localises to the cytoplasm. The catalysed reaction is [[Fe-S] cluster scaffold protein carrying a second [4Fe-4S](2+) cluster] + N(6)-octanoyl-L-lysyl-[protein] + 2 oxidized [2Fe-2S]-[ferredoxin] + 2 S-adenosyl-L-methionine + 4 H(+) = [[Fe-S] cluster scaffold protein] + N(6)-[(R)-dihydrolipoyl]-L-lysyl-[protein] + 4 Fe(3+) + 2 hydrogen sulfide + 2 5'-deoxyadenosine + 2 L-methionine + 2 reduced [2Fe-2S]-[ferredoxin]. Its pathway is protein modification; protein lipoylation via endogenous pathway; protein N(6)-(lipoyl)lysine from octanoyl-[acyl-carrier-protein]: step 2/2. Catalyzes the radical-mediated insertion of two sulfur atoms into the C-6 and C-8 positions of the octanoyl moiety bound to the lipoyl domains of lipoate-dependent enzymes, thereby converting the octanoylated domains into lipoylated derivatives. The protein is Lipoyl synthase of Serratia proteamaculans (strain 568).